Reading from the N-terminus, the 450-residue chain is L-galactonate dehydratase (450 aa).

Residue Lys-221 is part of the active site. Asp-251, Glu-277, and Glu-306 together coordinate Mg(2+). The active site involves His-356.

The protein belongs to the mandelate racemase/muconate lactonizing enzyme family. It depends on Mg(2+) as a cofactor.

It catalyses the reaction L-galactonate = 2-dehydro-3-deoxy-L-galactonate + H2O. Its pathway is carbohydrate acid metabolism. Mediates the conversion of L-galactonate to 2-dehydro-3-deoxy-L-galactonate, the second step in D-galacturonate catabolic process. This Hypocrea jecorina (Trichoderma reesei) protein is L-galactonate dehydratase (lgd1).